The chain runs to 248 residues: MILELDCGNSLIKWRVIEGAARSVAGGLAESDDALVEQLTSQQALPVRACRLVSVRSEQETSQLVARLEQLFPVSALVASSGKQLAGVRNGYLDYQRLGLDRWLALVAAHHLAKKACLVIDLGTAVTSDLVAADGVHLGGYICPGMTLMRSQLRTHTRRIRYDDAEARRALASLQPGQATAEAVERGCLLMLRGFVREQYAMACELLGPDCEIFLTGGDAELVRDELAGARIMPDLVFVGLALACPIE.

6 to 13 (DCGNSLIK) contacts ATP. Substrate-binding positions include Tyr-92 and 99–102 (GLDR). Asp-101 functions as the Proton acceptor in the catalytic mechanism. Asp-121 contributes to the K(+) binding site. Thr-124 provides a ligand contact to ATP. Thr-180 lines the substrate pocket.

Belongs to the type III pantothenate kinase family. In terms of assembly, homodimer. It depends on NH4(+) as a cofactor. Requires K(+) as cofactor.

It localises to the cytoplasm. The catalysed reaction is (R)-pantothenate + ATP = (R)-4'-phosphopantothenate + ADP + H(+). It functions in the pathway cofactor biosynthesis; coenzyme A biosynthesis; CoA from (R)-pantothenate: step 1/5. Its function is as follows. Catalyzes the phosphorylation of pantothenate (Pan), the first step in CoA biosynthesis. The polypeptide is Type III pantothenate kinase (Pseudomonas aeruginosa (strain LESB58)).